Here is a 462-residue protein sequence, read N- to C-terminus: Glycine--tRNA ligase (462 aa).

Positions 99 and 174 each coordinate substrate. ATP contacts are provided by residues 206–208 (RNE), 216–221 (FRTREF), 290–291 (EL), and 334–337 (GADR). 221 to 225 (FEQME) lines the substrate pocket. 330–334 (EPSLG) provides a ligand contact to substrate.

This sequence belongs to the class-II aminoacyl-tRNA synthetase family. In terms of assembly, homodimer.

It is found in the cytoplasm. It carries out the reaction tRNA(Gly) + glycine + ATP = glycyl-tRNA(Gly) + AMP + diphosphate. Functionally, catalyzes the attachment of glycine to tRNA(Gly). The sequence is that of Glycine--tRNA ligase from Macrococcus caseolyticus (strain JCSC5402) (Macrococcoides caseolyticum).